The primary structure comprises 53 residues: UPF0391 membrane protein BamMC406_6344 (53 aa).

The next 2 membrane-spanning stretches (helical) occupy residues Ala-5 to Ala-25 and Ile-30 to Val-50.

The protein belongs to the UPF0391 family.

The protein localises to the cell membrane. The chain is UPF0391 membrane protein BamMC406_6344 from Burkholderia ambifaria (strain MC40-6).